Reading from the N-terminus, the 239-residue chain is Tumor protein p53-inducible nuclear protein 1 (239 aa).

Positions 25–37 (EKEDDEWILVDFI) match the LIR motif.

Interacts with p53/TP53 and HIPK2. Interacts with PRKCG, GABARAP, GABARAPL1, GABARAPL2, MAP1LC3A, MAP1LC3B and MAP1LC3C. In terms of tissue distribution, ubiquitously expressed with highest levels in the thymus.

The protein localises to the cytoplasm. Its subcellular location is the cytosol. It localises to the nucleus. It is found in the PML body. The protein resides in the cytoplasmic vesicle. The protein localises to the autophagosome. Functionally, antiproliferative and proapoptotic protein involved in cell stress response which acts as a dual regulator of transcription and autophagy. Acts as a positive regulator of autophagy. In response to cellular stress or activation of autophagy, relocates to autophagosomes where it interacts with autophagosome-associated proteins GABARAP, GABARAPL1/L2, MAP1LC3A/B/C and regulates autophagy. Acts as an antioxidant and plays a major role in p53/TP53-driven oxidative stress response. Possesses both a p53/TP53-independent intracellular reactive oxygen species (ROS) regulatory function and a p53/TP53-dependent transcription regulatory function. Positively regulates p53/TP53 and p73/TP73 and stimulates their capacity to induce apoptosis and regulate cell cycle. In response to double-strand DNA breaks, promotes p53/TP53 phosphorylation on 'Ser-46' and subsequent apoptosis. Acts as a tumor suppressor by inducing cell death by an autophagy and caspase-dependent mechanism. Can reduce cell migration by regulating the expression of SPARC. The polypeptide is Tumor protein p53-inducible nuclear protein 1 (Trp53inp1) (Mus musculus (Mouse)).